A 117-amino-acid polypeptide reads, in one-letter code: uncharacterized protein (117 aa).

This is an uncharacterized protein from Acheta domesticus (House cricket).